The chain runs to 174 residues: tRNA (cytidine(56)-2'-O)-methyltransferase (174 aa).

Residues Leu80, 105–109 (GAEKV), and 123–130 (ISNQPHSE) contribute to the S-adenosyl-L-methionine site.

It belongs to the aTrm56 family. In terms of assembly, homodimer.

The protein resides in the cytoplasm. It catalyses the reaction cytidine(56) in tRNA + S-adenosyl-L-methionine = 2'-O-methylcytidine(56) in tRNA + S-adenosyl-L-homocysteine + H(+). Functionally, specifically catalyzes the AdoMet-dependent 2'-O-ribose methylation of cytidine at position 56 in tRNAs. In Metallosphaera sedula (strain ATCC 51363 / DSM 5348 / JCM 9185 / NBRC 15509 / TH2), this protein is tRNA (cytidine(56)-2'-O)-methyltransferase.